The sequence spans 225 residues: Glutathione s-transferase kappa 2 (225 aa).

Residues 15–17 (SPY), N52, and 200–201 (SD) contribute to the glutathione site.

Belongs to the GST superfamily. Kappa family. Expressed in the pharynx, body wall muscles and epidermis. Weaker expression is seen in the intestine.

Its subcellular location is the mitochondrion. The catalysed reaction is RX + glutathione = an S-substituted glutathione + a halide anion + H(+). In terms of biological role, has roles in respiratory and lipid metabolism. The sequence is that of Glutathione s-transferase kappa 2 (gstk-2) from Caenorhabditis elegans.